A 634-amino-acid polypeptide reads, in one-letter code: Extracellular metalloproteinase mep (634 aa).

An N-terminal signal peptide occupies residues 1–18 (MRGLLLAGALALPASVFA). The propeptide occupies 19 to 245 (HPAHQSYGLN…IHGVVDYVAE (227 aa)). N286 carries an N-linked (GlcNAc...) asparagine glycan. Residue H429 participates in Zn(2+) binding. E430 is a catalytic residue. A Zn(2+)-binding site is contributed by H433.

The protein belongs to the peptidase M36 family. The cofactor is Zn(2+).

The protein localises to the secreted. Functionally, secreted metalloproteinase that allows assimilation of proteinaceous substrates and probably acts as a virulence factor. This is Extracellular metalloproteinase mep (mep) from Aspergillus fumigatus (strain CBS 144.89 / FGSC A1163 / CEA10) (Neosartorya fumigata).